The sequence spans 240 residues: HTH-type transcriptional regulator Mce2R (240 aa).

Positions 9-77 (RSVPEEVFEQ…QGDVTTVRDF (69 aa)) constitute an HTH gntR-type domain. A DNA-binding region (H-T-H motif) is located at residues 37 to 56 (ERRLAELLGVSRPAVREALK).

Functionally, negatively regulates the expression of its operon as well as expression of end (endonuclease 4). The protein is HTH-type transcriptional regulator Mce2R (mce2R) of Mycobacterium tuberculosis (strain CDC 1551 / Oshkosh).